The following is a 48-amino-acid chain: Delta-stichotoxin-She1a (48 aa).

3 cysteine pairs are disulfide-bonded: Cys3–Cys43, Cys5–Cys33, and Cys26–Cys44.

It belongs to the sea anemone sodium channel inhibitory toxin family. Type II subfamily.

The protein localises to the secreted. The protein resides in the nematocyst. Binds specifically to voltage-gated sodium channels (Nav), thereby delaying their inactivation during signal transduction. Is highly toxic to crabs (by intrahemocoelic injection), but without effect upon mice (by intraperitoneal injection). The polypeptide is Delta-stichotoxin-She1a (Stichodactyla helianthus (Sun anemone)).